Reading from the N-terminus, the 149-residue chain is SsrA-binding protein (149 aa).

It belongs to the SmpB family.

It localises to the cytoplasm. Required for rescue of stalled ribosomes mediated by trans-translation. Binds to transfer-messenger RNA (tmRNA), required for stable association of tmRNA with ribosomes. tmRNA and SmpB together mimic tRNA shape, replacing the anticodon stem-loop with SmpB. tmRNA is encoded by the ssrA gene; the 2 termini fold to resemble tRNA(Ala) and it encodes a 'tag peptide', a short internal open reading frame. During trans-translation Ala-aminoacylated tmRNA acts like a tRNA, entering the A-site of stalled ribosomes, displacing the stalled mRNA. The ribosome then switches to translate the ORF on the tmRNA; the nascent peptide is terminated with the 'tag peptide' encoded by the tmRNA and targeted for degradation. The ribosome is freed to recommence translation, which seems to be the essential function of trans-translation. This chain is SsrA-binding protein, found in Carboxydothermus hydrogenoformans (strain ATCC BAA-161 / DSM 6008 / Z-2901).